The chain runs to 167 residues: Ubiquitin-fold modifier-conjugating enzyme 1 (167 aa).

Catalysis depends on Cys116, which acts as the Glycyl thioester intermediate. Lys122 participates in a covalent cross-link: Glycyl lysine isopeptide (Lys-Gly) (interchain with G-Cter in UFM1).

Belongs to the ubiquitin-conjugating enzyme family. UFC1 subfamily. As to quaternary structure, interacts with UBA5 (via C-terminus). Interacts with UFL1. Interacts with UFM1. Interacts with KIRREL3. In terms of processing, ufmylated at Lys-122. Deufmylated by UFSP1.

Functionally, E2-like enzyme which specifically catalyzes the second step in ufmylation. Accepts the ubiquitin-like modifier UFM1 from the E1 enzyme UBA5 and forms an intermediate with UFM1 via a thioester linkage. Ufmylation is involved in various processes, such as ribosome recycling, response to DNA damage, interferon response or reticulophagy (also called ER-phagy). This is Ubiquitin-fold modifier-conjugating enzyme 1 from Homo sapiens (Human).